A 490-amino-acid polypeptide reads, in one-letter code: Stomatal closure-related actin-binding protein 3 (490 aa).

Belongs to the SCAB family. As to expression, expressed in roots, stems, leaves, siliques and flowers.

The protein localises to the cytoplasm. The protein resides in the cytoskeleton. Functionally, probable plant-specific actin binding protein that bundles and stabilizes microfilaments (MFs). The sequence is that of Stomatal closure-related actin-binding protein 3 from Arabidopsis thaliana (Mouse-ear cress).